The primary structure comprises 436 residues: UPF0597 protein YhaM (436 aa).

The protein belongs to the UPF0597 family.

This Salmonella newport (strain SL254) protein is UPF0597 protein YhaM.